The chain runs to 184 residues: Threonylcarbamoyl-AMP synthase (184 aa).

The YrdC-like domain maps to 3-184 (AWFIQKAVSV…DAATGAILRQ (182 aa)).

Belongs to the SUA5 family. TsaC subfamily.

The protein resides in the cytoplasm. The enzyme catalyses L-threonine + hydrogencarbonate + ATP = L-threonylcarbamoyladenylate + diphosphate + H2O. Functionally, required for the formation of a threonylcarbamoyl group on adenosine at position 37 (t(6)A37) in tRNAs that read codons beginning with adenine. Catalyzes the conversion of L-threonine, HCO(3)(-)/CO(2) and ATP to give threonylcarbamoyl-AMP (TC-AMP) as the acyladenylate intermediate, with the release of diphosphate. This Hahella chejuensis (strain KCTC 2396) protein is Threonylcarbamoyl-AMP synthase.